Here is a 491-residue protein sequence, read N- to C-terminus: Cytochrome P450 2B2 (491 aa).

Serine 128 bears the Phosphoserine; by PKA mark. Cysteine 436 lines the heme pocket.

The protein belongs to the cytochrome P450 family. Heme is required as a cofactor. Phosphorylation is accompanied by a decrease in enzyme activity.

It localises to the endoplasmic reticulum membrane. It is found in the microsome membrane. The enzyme catalyses an organic molecule + reduced [NADPH--hemoprotein reductase] + O2 = an alcohol + oxidized [NADPH--hemoprotein reductase] + H2O + H(+). In terms of biological role, cytochromes P450 are a group of heme-thiolate monooxygenases. In liver microsomes, this enzyme is involved in an NADPH-dependent electron transport pathway. It oxidizes a variety of structurally unrelated compounds, including steroids, fatty acids, and xenobiotics. The polypeptide is Cytochrome P450 2B2 (Cyp2b2) (Rattus norvegicus (Rat)).